A 264-amino-acid polypeptide reads, in one-letter code: Thiazole synthase (264 aa).

Catalysis depends on Lys106, which acts as the Schiff-base intermediate with DXP. 1-deoxy-D-xylulose 5-phosphate contacts are provided by residues Gly167, 193–194, and 215–216; these read AG and NS.

This sequence belongs to the ThiG family. Homotetramer. Forms heterodimers with either ThiH or ThiS.

It localises to the cytoplasm. The enzyme catalyses [ThiS sulfur-carrier protein]-C-terminal-Gly-aminoethanethioate + 2-iminoacetate + 1-deoxy-D-xylulose 5-phosphate = [ThiS sulfur-carrier protein]-C-terminal Gly-Gly + 2-[(2R,5Z)-2-carboxy-4-methylthiazol-5(2H)-ylidene]ethyl phosphate + 2 H2O + H(+). It participates in cofactor biosynthesis; thiamine diphosphate biosynthesis. In terms of biological role, catalyzes the rearrangement of 1-deoxy-D-xylulose 5-phosphate (DXP) to produce the thiazole phosphate moiety of thiamine. Sulfur is provided by the thiocarboxylate moiety of the carrier protein ThiS. In vitro, sulfur can be provided by H(2)S. In Ectopseudomonas mendocina (strain ymp) (Pseudomonas mendocina), this protein is Thiazole synthase.